A 218-amino-acid polypeptide reads, in one-letter code: uncharacterized protein (218 aa).

Residues H57, H59, D61, H62, H138, D158, and H199 each contribute to the Zn(2+) site.

The protein belongs to the metallo-beta-lactamase superfamily. Glyoxalase II family. Requires Zn(2+) as cofactor.

This is an uncharacterized protein from Mycobacterium leprae (strain TN).